A 719-amino-acid polypeptide reads, in one-letter code: Phosphoribosylformylglycinamidine synthase subunit PurL (719 aa).

His-47 is a catalytic residue. ATP is bound by residues Tyr-50 and Lys-89. Mg(2+) is bound at residue Glu-91. Substrate contacts are provided by residues Ser-92 to His-95 and Arg-114. His-93 serves as the catalytic Proton acceptor. Mg(2+) is bound at residue Asp-115. Gln-238 contacts substrate. Asp-266 is a binding site for Mg(2+). A substrate-binding site is contributed by Glu-310 to Gln-312. ATP contacts are provided by Asp-488 and Gly-525. Mg(2+) is bound at residue Asn-526. Ser-528 contacts substrate.

It belongs to the FGAMS family. As to quaternary structure, monomer. Part of the FGAM synthase complex composed of 1 PurL, 1 PurQ and 2 PurS subunits.

The protein resides in the cytoplasm. It carries out the reaction N(2)-formyl-N(1)-(5-phospho-beta-D-ribosyl)glycinamide + L-glutamine + ATP + H2O = 2-formamido-N(1)-(5-O-phospho-beta-D-ribosyl)acetamidine + L-glutamate + ADP + phosphate + H(+). It participates in purine metabolism; IMP biosynthesis via de novo pathway; 5-amino-1-(5-phospho-D-ribosyl)imidazole from N(2)-formyl-N(1)-(5-phospho-D-ribosyl)glycinamide: step 1/2. In terms of biological role, part of the phosphoribosylformylglycinamidine synthase complex involved in the purines biosynthetic pathway. Catalyzes the ATP-dependent conversion of formylglycinamide ribonucleotide (FGAR) and glutamine to yield formylglycinamidine ribonucleotide (FGAM) and glutamate. The FGAM synthase complex is composed of three subunits. PurQ produces an ammonia molecule by converting glutamine to glutamate. PurL transfers the ammonia molecule to FGAR to form FGAM in an ATP-dependent manner. PurS interacts with PurQ and PurL and is thought to assist in the transfer of the ammonia molecule from PurQ to PurL. In Cereibacter sphaeroides (strain ATCC 17025 / ATH 2.4.3) (Rhodobacter sphaeroides), this protein is Phosphoribosylformylglycinamidine synthase subunit PurL.